The following is a 1662-amino-acid chain: Cortactin-binding protein 2 (1662 aa).

Disordered regions lie at residues Met1–Ala23, Lys202–Thr235, Ile365–Gly439, and Gly453–Ser477. The stretch at Arg118–Lys275 forms a coiled coil. The span at Pro385 to Ser395 shows a compositional bias: low complexity. Over residues Ala404–Ala421 the composition is skewed to polar residues. Arg497 carries the asymmetric dimethylarginine modification. Residues Phe498–Ser615 form a disordered region. Polar residues-rich tracts occupy residues Asp516–Lys529 and Thr582–Gln592. 5 ANK repeats span residues Gly708–Tyr738, Asp742–Ala771, Asn775–His804, Gly808–Val837, and Asp841–Gly870. The disordered stretch occupies residues Asn871 to Lys897. The segment covering Ser874–Ser891 has biased composition (acidic residues). The stretch at Glu911–Arg941 is one ANK 6 repeat. A disordered region spans residues Lys1446–Trp1473. Ser1523 carries the post-translational modification Phosphoserine. The segment at Val1614–Lys1662 is disordered. Residues Ser1623 to Gln1637 show a composition bias toward low complexity. A compositionally biased stretch (basic and acidic residues) spans Ser1644–Lys1662.

In terms of assembly, interacts with CTTN/cortactin SH3 domain. Interacts with STRN, STRN4/zinedin and MOB4/phocein; this interactions mediate the association with the STRIPAK core complex and may regulate dendritic spine distribution of the STRIPAK complex in hippocampal neurons. Activation of glutamate receptors weakens the interaction with STRN and STRN4.

The protein resides in the cytoplasm. It localises to the cell cortex. It is found in the cell projection. The protein localises to the dendritic spine. Functionally, regulates the dendritic spine distribution of CTTN/cortactin in hippocampal neurons, and thus controls dendritic spinogenesis and dendritic spine maintenance. Associates with the striatin-interacting phosphatase and kinase (STRIPAK) core complex to regulate dendritic spine distribution of the STRIPAK complex in hippocampal neurons. The sequence is that of Cortactin-binding protein 2 (CTTNBP2) from Callithrix jacchus (White-tufted-ear marmoset).